The primary structure comprises 290 residues: MSPSAKKRPKNSRVSKMQDEKLRDETEQPVSKVIERNRLRTVLKNLSLLKLLKSSNRRIQELHKLAKRCWHSLLSVPKILRISSGENSACNKTKQNNEEFQEIGCSEKELKSKKLESTGDPKKKEYKEWKSQVQSGMRNKEKTSLAAMPRKEKHIEPEVPRTSRDDSLNPGVQGRQPLTEGPRVIFIKPYRNRTPMGHMKQLDVADQWIWFEGLPTRIHLPAPRVMCRSSTLRWVKRRCTRFCSASLEMPMWHPYKVDVTWTRARGASRGWRSRHQLKGRNGWRNSRVYK.

A compositionally biased stretch (basic residues) spans 1–13 (MSPSAKKRPKNSR). Disordered regions lie at residues 1-29 (MSPS…TEQP) and 114-178 (KLES…RQPL). Basic and acidic residues-rich tracts occupy residues 16-26 (KMQDEKLRDET), 114-130 (KLES…KEWK), and 138-167 (RNKE…RDDS).

In terms of assembly, interacts with p53/TP53. In terms of tissue distribution, highly expressed in heart, brain and small intestine. Less abundant in skeletal muscle, spleen, prostate, ovary and colon. A smaller transcript is expressed specifically in the testis.

It is found in the cytoplasm. The protein localises to the nucleus. Functionally, may play a significant role in p53/TP53-mediating signaling pathway. This chain is TP53-target gene 5 protein (TP53TG5), found in Homo sapiens (Human).